We begin with the raw amino-acid sequence, 446 residues long: uncharacterized protein (446 aa).

Helical transmembrane passes span 20 to 40 (LIGV…IAIV), 42 to 62 (SGFS…FVFE), 95 to 115 (WVYW…ISLF), 127 to 147 (VFAS…LSVF), 160 to 180 (AAIF…LSGG), 205 to 225 (LIYA…AVHL), 237 to 257 (LMLA…LLLV), 284 to 304 (IFNG…LFAV), 331 to 351 (WPAL…SLVL), 355 to 375 (IYEH…LFIL), 388 to 408 (GKTQ…GTLF), and 414 to 434 (PGFF…MIYQ).

It belongs to the amino acid-polyamine-organocation (APC) superfamily.

It localises to the cell membrane. This is an uncharacterized protein from Bacillus subtilis (strain 168).